Consider the following 429-residue polypeptide: Serine--tRNA ligase (429 aa).

236–238 (TAE) serves as a coordination point for L-serine. ATP is bound at residue 267–269 (RSE). Glutamate 290 lines the L-serine pocket. 354–357 (EISS) lines the ATP pocket. Serine 390 contributes to the L-serine binding site.

Belongs to the class-II aminoacyl-tRNA synthetase family. Type-1 seryl-tRNA synthetase subfamily. As to quaternary structure, homodimer. The tRNA molecule binds across the dimer.

It is found in the cytoplasm. It catalyses the reaction tRNA(Ser) + L-serine + ATP = L-seryl-tRNA(Ser) + AMP + diphosphate + H(+). The catalysed reaction is tRNA(Sec) + L-serine + ATP = L-seryl-tRNA(Sec) + AMP + diphosphate + H(+). It participates in aminoacyl-tRNA biosynthesis; selenocysteinyl-tRNA(Sec) biosynthesis; L-seryl-tRNA(Sec) from L-serine and tRNA(Sec): step 1/1. In terms of biological role, catalyzes the attachment of serine to tRNA(Ser). Is also able to aminoacylate tRNA(Sec) with serine, to form the misacylated tRNA L-seryl-tRNA(Sec), which will be further converted into selenocysteinyl-tRNA(Sec). The protein is Serine--tRNA ligase of Alcanivorax borkumensis (strain ATCC 700651 / DSM 11573 / NCIMB 13689 / SK2).